Reading from the N-terminus, the 419-residue chain is WD repeat-containing protein JIP5 (419 aa).

WD repeat units lie at residues 4–45, 66–105, 108–147, 180–220, 224–263, 268–308, and 351–390; these read ALSS…HNQS, PSHK…VKAR, RAHE…EGDA, DQED…KGVE, DQED…LDHA, GHPS…GIVG, and DAAE…QPPP. A disordered region spans residues 172 to 192; that stretch reads DPPRSKKKDQEDDLKRKRDEE. Positions 372–408 are disordered; sequence SADGSDESAGESDVMQPPPATKRRTAKSKAGKKSVHD. Residues 392–404 are compositionally biased toward basic residues; the sequence is TKRRTAKSKAGKK.

The protein belongs to the WD repeat WDR55 family.

It is found in the nucleus. The protein localises to the nucleolus. This chain is WD repeat-containing protein JIP5 (JIP5), found in Malassezia globosa (strain ATCC MYA-4612 / CBS 7966) (Dandruff-associated fungus).